Reading from the N-terminus, the 197-residue chain is Putative peptidyl-prolyl cis-trans isomerase (197 aa).

A PPIase cyclophilin-type domain is found at 14 to 195 (NEIKLIMHTN…HDITIDSIEI (182 aa)).

Belongs to the cyclophilin-type PPIase family.

The catalysed reaction is [protein]-peptidylproline (omega=180) = [protein]-peptidylproline (omega=0). PPIases accelerate the folding of proteins. It catalyzes the cis-trans isomerization of proline imidic peptide bonds in oligopeptides. The protein is Putative peptidyl-prolyl cis-trans isomerase of Staphylococcus saprophyticus subsp. saprophyticus (strain ATCC 15305 / DSM 20229 / NCIMB 8711 / NCTC 7292 / S-41).